A 228-amino-acid polypeptide reads, in one-letter code: Serum amyloid P-component (228 aa).

A signal peptide spans Met1–Ala20. In terms of domain architecture, Pentraxin (PTX) spans Asn25 to Asp224. An N-linked (GlcNAc...) asparagine glycan is attached at Asn52. Cys56 and Cys115 are oxidised to a cystine. Residues Asp78, Asn79, Glu156, Gln157, Asp158, and Gln168 each coordinate Ca(2+).

The protein belongs to the pentraxin family. As to quaternary structure, homopentamer. Pentraxin (or pentaxin) have a discoid arrangement of 5 non-covalently bound subunits. Requires Ca(2+) as cofactor.

It is found in the secreted. In Rattus norvegicus (Rat), this protein is Serum amyloid P-component (Apcs).